The following is a 389-amino-acid chain: Coproporphyrin III ferrochelatase (389 aa).

Residues serine 70 and tyrosine 139 each coordinate Fe-coproporphyrin III. Residue histidine 205 participates in Fe(2+) binding. The segment at 207 to 229 (IPSTDAGKSGPSGRPDSGEPWGE) is disordered. Residue glutamate 303 participates in Fe(2+) binding.

This sequence belongs to the ferrochelatase family.

The protein localises to the cytoplasm. It catalyses the reaction Fe-coproporphyrin III + 2 H(+) = coproporphyrin III + Fe(2+). The protein operates within porphyrin-containing compound metabolism; protoheme biosynthesis. Its function is as follows. Involved in coproporphyrin-dependent heme b biosynthesis. Catalyzes the insertion of ferrous iron into coproporphyrin III to form Fe-coproporphyrin III. This chain is Coproporphyrin III ferrochelatase, found in Leifsonia xyli subsp. xyli (strain CTCB07).